Here is a 585-residue protein sequence, read N- to C-terminus: Arginine--tRNA ligase (585 aa).

Positions 126–136 (PNIAKEMHVGH) match the 'HIGH' region motif.

It belongs to the class-I aminoacyl-tRNA synthetase family. Monomer.

Its subcellular location is the cytoplasm. The enzyme catalyses tRNA(Arg) + L-arginine + ATP = L-arginyl-tRNA(Arg) + AMP + diphosphate. This is Arginine--tRNA ligase from Rippkaea orientalis (strain PCC 8801 / RF-1) (Cyanothece sp. (strain PCC 8801)).